The following is a 206-amino-acid chain: MASQKKQLFKIIILGDSGVGKTSLMNQYVNARFTQQYRATVGADFMAKEVMIDDRMVTLQIWDTAGQERFQSLGGAFYRGADCCVLVYDITNPKSFDSLDSWRDEFLMQGQPKDPEHFPFVVLGNKLDKATERKVQESKSQQWCKSHGNIQFFEVSAKDATNIEQAFQDIAKAAASQEKDEEIFFPTTVTLTKQDPKKQTKQGGCC.

Position 15–22 (15–22 (GDSGVGKT)) interacts with GTP. S17 and S23 each carry phosphoserine. A phosphothreonine mark is found at T34, T40, and T64. GTP-binding positions include 34 to 40 (TQQYRAT) and 63 to 67 (DTAGQ). The Effector region motif lies at 37–45 (YRATVGADF). S72 is modified (phosphoserine). Phosphotyrosine occurs at positions 78 and 88. GTP-binding positions include 125-128 (NKLD) and 157-158 (AK). S-geranylgeranyl cysteine attachment occurs at residues C205 and C206.

This sequence belongs to the small GTPase superfamily. Rab family. Glycosylated.

It is found in the cytoplasm. It localises to the cytoskeleton. The sequence is that of Ras-related protein Rab-7b from Paramecium octaurelia.